The primary structure comprises 322 residues: Transmembrane and ubiquitin-like domain-containing protein 2 (322 aa).

Residues 38–58 traverse the membrane as a helical segment; it reads VVAGVVVLILALVLAWLSTYV. Residues 88–168 are disordered; it reads VAGQGTPEPT…VRSEDSTCLP (81 aa). A compositionally biased stretch (gly residues) spans 115-130; the sequence is EGGGDPTGEPGAGGGV. A Ubiquitin-like domain is found at 174 to 247; the sequence is ISVRLKFFND…IHCHRSPPGS (74 aa). A run of 2 helical transmembrane segments spans residues 267-287 and 296-316; these read LGVS…GVVW and FFTA…SFLV.

It is found in the membrane. The polypeptide is Transmembrane and ubiquitin-like domain-containing protein 2 (TMUB2) (Bos taurus (Bovine)).